The following is a 439-amino-acid chain: Tubulin beta chain (439 aa).

Residues Q11, E69, S138, G142, T143, G144, N204, and N226 each contribute to the GTP site. A Mg(2+)-binding site is contributed by E69.

This sequence belongs to the tubulin family. In terms of assembly, dimer of alpha and beta chains. A typical microtubule is a hollow water-filled tube with an outer diameter of 25 nm and an inner diameter of 15 nM. Alpha-beta heterodimers associate head-to-tail to form protofilaments running lengthwise along the microtubule wall with the beta-tubulin subunit facing the microtubule plus end conferring a structural polarity. Microtubules usually have 13 protofilaments but different protofilament numbers can be found in some organisms and specialized cells. The cofactor is Mg(2+).

It localises to the cytoplasm. It is found in the cytoskeleton. Tubulin is the major constituent of microtubules, a cylinder consisting of laterally associated linear protofilaments composed of alpha- and beta-tubulin heterodimers. Microtubules grow by the addition of GTP-tubulin dimers to the microtubule end, where a stabilizing cap forms. Below the cap, tubulin dimers are in GDP-bound state, owing to GTPase activity of alpha-tubulin. The sequence is that of Tubulin beta chain (TUB2) from Encephalitozoon cuniculi (strain GB-M1) (Microsporidian parasite).